We begin with the raw amino-acid sequence, 297 residues long: tRNA dimethylallyltransferase (297 aa).

ATP is bound at residue 15–22 (GPTASGKS). 17–22 (TASGKS) lines the substrate pocket. Interaction with substrate tRNA regions lie at residues 40–43 (DSMQ) and 164–168 (QRIVR).

This sequence belongs to the IPP transferase family. Monomer. It depends on Mg(2+) as a cofactor.

The enzyme catalyses adenosine(37) in tRNA + dimethylallyl diphosphate = N(6)-dimethylallyladenosine(37) in tRNA + diphosphate. In terms of biological role, catalyzes the transfer of a dimethylallyl group onto the adenine at position 37 in tRNAs that read codons beginning with uridine, leading to the formation of N6-(dimethylallyl)adenosine (i(6)A). This chain is tRNA dimethylallyltransferase, found in Rhizobium etli (strain CIAT 652).